A 326-amino-acid polypeptide reads, in one-letter code: Target of rapamycin complex subunit lst8 (326 aa).

7 WD repeats span residues 1 to 37 (MNVNQGTVGSDPVILATAGYDHTVRFWQAHSGICTRT), 40 to 80 (HQDS…PVIN), 83 to 122 (GVSKNITSVGFHEDGRWMYTGGEDCMARIWDLRSRNLQCQ), 126 to 165 (QVNAPINCVCLHPNQAELIVGDQSGVIHIWDLKTDHNEQL), 168 to 207 (EPDVSVNSVHIDPDASYMAAVNSSGNCYVWNLAGGMGDEV), 218 to 257 (AHKRYSLRCKFSPDSTLLATCSADQTCKIWRTSNFSLMTE), and 268 to 309 (TSRG…REYS).

The protein belongs to the WD repeat LST8 family. Part of the mechanistic target of rapamycin complex 1 (mTORC1) which contains MTOR, MLST8 and RPTOR. Component of the mechanistic target of rapamycin complex 2 (mTORC2), consisting in two heterotretramers composed of MTOR, MLST8, RICTOR and MAPKAP1/SIN1.

The protein localises to the lysosome membrane. It is found in the cytoplasm. In terms of biological role, subunit of both mTORC1 and mTORC2, which regulates cell growth and survival in response to nutrient and hormonal signals. mTORC1 is activated in response to growth factors or amino acids. In response to nutrients, mTORC1 is recruited to the lysosome membrane and promotes protein, lipid and nucleotide synthesis by phosphorylating several substrates, such as ribosomal protein S6 kinase (RPS6KB1 and RPS6KB2) and EIF4EBP1 (4E-BP1). In the same time, it inhibits catabolic pathways by phosphorylating the autophagy initiation components ULK1 and ATG13, as well as transcription factor TFEB, a master regulators of lysosomal biogenesis and autophagy. The mTORC1 complex is inhibited in response to starvation and amino acid depletion. Within mTORC1, MLST8 interacts directly with MTOR and enhances its kinase activity. In nutrient-poor conditions, stabilizes the MTOR-RPTOR interaction and favors RPTOR-mediated inhibition of MTOR activity. As part of the mTORC2 complex, transduces signals from growth factors to pathways involved in proliferation, cytoskeletal organization, lipogenesis and anabolic output. mTORC2 is also activated by growth factors, but seems to be nutrient-insensitive. In response to growth factors, mTORC2 phosphorylates and activates AGC protein kinase family members, including AKT (AKT1, AKT2 and AKT3), PKC (PRKCA, PRKCB and PRKCE) and SGK1. mTORC2 functions upstream of Rho GTPases to regulate the actin cytoskeleton, probably by activating one or more Rho-type guanine nucleotide exchange factors. mTORC2 promotes the serum-induced formation of stress-fibers or F-actin. Within mTORC2, MLST8 acts as a bridge between MAPKAP1/SIN1 and MTOR. This Danio rerio (Zebrafish) protein is Target of rapamycin complex subunit lst8 (mlst8).